Here is a 204-residue protein sequence, read N- to C-terminus: RNA-free ribonuclease P (204 aa).

This sequence belongs to the HARP family.

The enzyme catalyses Endonucleolytic cleavage of RNA, removing 5'-extranucleotides from tRNA precursor.. Functionally, RNA-free RNase P that catalyzes the removal of the 5'-leader sequence from pre-tRNA to produce the mature 5'-terminus. This Pyrococcus abyssi (strain GE5 / Orsay) protein is RNA-free ribonuclease P.